The primary structure comprises 601 residues: Elongation factor 4 (601 aa).

The region spanning 8 to 189 (EQIRNFGIIA…LIVRKAPPPK (182 aa)) is the tr-type G domain. GTP is bound at residue 20-25 (DHGKST).

Belongs to the TRAFAC class translation factor GTPase superfamily. Classic translation factor GTPase family. LepA subfamily.

The protein resides in the cell membrane. The enzyme catalyses GTP + H2O = GDP + phosphate + H(+). Required for accurate and efficient protein synthesis under certain stress conditions. May act as a fidelity factor of the translation reaction, by catalyzing a one-codon backward translocation of tRNAs on improperly translocated ribosomes. Back-translocation proceeds from a post-translocation (POST) complex to a pre-translocation (PRE) complex, thus giving elongation factor G a second chance to translocate the tRNAs correctly. Binds to ribosomes in a GTP-dependent manner. This Tropheryma whipplei (strain TW08/27) (Whipple's bacillus) protein is Elongation factor 4.